The following is a 741-amino-acid chain: Translation initiation factor IF-2 (741 aa).

Basic and acidic residues-rich tracts occupy residues 48–74 (HQYR…DKPK) and 107–123 (KGKE…EKKA). The interval 48-158 (HQYRPKAEKK…PQPAKKEKEL (111 aa)) is disordered. The span at 127 to 139 (AKKKGKGPAKGKK) shows a compositional bias: basic residues. Low complexity predominate over residues 140–151 (QAAPAAKQVPQP). Positions 242–411 (ERPPVVTIMG…LLVSEMEELK (170 aa)) constitute a tr-type G domain. A G1 region spans residues 251-258 (GHVDHGKT). 251–258 (GHVDHGKT) contacts GTP. Residues 276–280 (GITQH) are G2. The G3 stretch occupies residues 297–300 (DTPG). GTP-binding positions include 297–301 (DTPGH) and 351–354 (NKMD). A G4 region spans residues 351 to 354 (NKMD). The segment at 387 to 389 (SAK) is G5.

Belongs to the TRAFAC class translation factor GTPase superfamily. Classic translation factor GTPase family. IF-2 subfamily.

It localises to the cytoplasm. One of the essential components for the initiation of protein synthesis. Protects formylmethionyl-tRNA from spontaneous hydrolysis and promotes its binding to the 30S ribosomal subunits. Also involved in the hydrolysis of GTP during the formation of the 70S ribosomal complex. This Geobacillus stearothermophilus (Bacillus stearothermophilus) protein is Translation initiation factor IF-2 (infB).